The chain runs to 388 residues: Nocturnin (388 aa).

A Mg(2+)-binding site is contributed by E152. Substrate is bound by residues E152, 176-178 (KPW), N220, 243-246 (HLKA), 281-283 (DFN), and H371.

The protein belongs to the CCR4/nocturin family. The cofactor is Mg(2+). Expressed only in the photoreceptors of the retina. Expression is controlled by the retinal circadian clock.

The protein resides in the cytoplasm. It is found in the nucleus. Its subcellular location is the perinuclear region. It localises to the mitochondrion. The catalysed reaction is NADP(+) + H2O = phosphate + NAD(+). The enzyme catalyses NADPH + H2O = phosphate + NADH. Its function is as follows. Phosphatase which catalyzes the conversion of NADP(+) to NAD(+) and of NADPH to NADH. Shows a small preference for NADPH over NADP(+). Component of the circadian clock or downstream effector of clock function. Exhibits a high amplitude circadian rhythm with maximal levels in early evening. In constant darkness or constant light, the amplitude of the rhythm decreases. The chain is Nocturnin from Xenopus laevis (African clawed frog).